We begin with the raw amino-acid sequence, 149 residues long: 3-hydroxyacyl-[acyl-carrier-protein] dehydratase FabZ (149 aa).

His53 is a catalytic residue.

It belongs to the thioester dehydratase family. FabZ subfamily.

Its subcellular location is the cytoplasm. It carries out the reaction a (3R)-hydroxyacyl-[ACP] = a (2E)-enoyl-[ACP] + H2O. Its function is as follows. Involved in unsaturated fatty acids biosynthesis. Catalyzes the dehydration of short chain beta-hydroxyacyl-ACPs and long chain saturated and unsaturated beta-hydroxyacyl-ACPs. The sequence is that of 3-hydroxyacyl-[acyl-carrier-protein] dehydratase FabZ from Neisseria gonorrhoeae (strain ATCC 700825 / FA 1090).